Consider the following 67-residue polypeptide: UPF0434 protein RALTA_A0561 (67 aa).

This sequence belongs to the UPF0434 family.

This Cupriavidus taiwanensis (strain DSM 17343 / BCRC 17206 / CCUG 44338 / CIP 107171 / LMG 19424 / R1) (Ralstonia taiwanensis (strain LMG 19424)) protein is UPF0434 protein RALTA_A0561.